The sequence spans 229 residues: C-&gt;U-editing enzyme APOBEC-1 (229 aa).

Residues valine 10–leucine 134 form the CMP/dCMP-type deaminase domain. Residue histidine 61 participates in Zn(2+) binding. Glutamate 63 acts as the Proton donor in catalysis. Residues cysteine 93 and cysteine 96 each contribute to the Zn(2+) site.

The protein belongs to the cytidine and deoxycytidylate deaminase family. In terms of assembly, homodimer. Interacts with A1CF; form an mRNA editing complex. Interacts with RBM47; form an mRNA editing complex. Found in a complex with CELF2/CUGBP2 and A1CF. Interacts with HNRPAB. Interacts with SYNCRIP. Zn(2+) is required as a cofactor. Expressed in the spleen. Expressed at lower level in the kidney, testis, lung, brain and liver.

It is found in the cytoplasm. The protein localises to the nucleus. It catalyses the reaction a cytidine in mRNA + H2O + H(+) = a uridine in mRNA + NH4(+). The catalysed reaction is cytidine(6666) in apoB mRNA + H2O + H(+) = uridine(6666) in apoB mRNA + NH4(+). In terms of biological role, cytidine deaminase catalyzing the cytidine to uridine postranscriptional editing of a variety of mRNAs. Form complexes with cofactors that confer differential editing activity and selectivity. Responsible for the postranscriptional editing of a CAA codon for Gln to a UAA codon for stop in the apolipoprotein B mRNA. Also involved in CGA (Arg) to UGA (Stop) editing in the NF1 mRNA. May also play a role in the epigenetic regulation of gene expression by participating in DNA demethylation. The sequence is that of C-&gt;U-editing enzyme APOBEC-1 from Mus musculus (Mouse).